A 116-amino-acid polypeptide reads, in one-letter code: Large ribosomal subunit protein uL22c (116 aa).

It belongs to the universal ribosomal protein uL22 family. Part of the 50S ribosomal subunit.

It localises to the plastid. It is found in the chloroplast. Its function is as follows. This protein binds specifically to 23S rRNA. The globular domain of the protein is located near the polypeptide exit tunnel on the outside of the subunit, while an extended beta-hairpin is found that lines the wall of the exit tunnel in the center of the 70S ribosome. The polypeptide is Large ribosomal subunit protein uL22c (rpl22) (Psilotum nudum (Whisk fern)).